Here is a 126-residue protein sequence, read N- to C-terminus: Fluoride-specific ion channel FluC (126 aa).

A run of 4 helical transmembrane segments spans residues 4 to 24, 38 to 58, 71 to 91, and 104 to 124; these read FAIL…RYLV, YGTL…IAAF, IIGL…MDNV, and LNVV…FQLL. Positions 78 and 81 each coordinate Na(+).

The protein belongs to the fluoride channel Fluc/FEX (TC 1.A.43) family.

Its subcellular location is the cell inner membrane. The enzyme catalyses fluoride(in) = fluoride(out). Its activity is regulated as follows. Na(+) is not transported, but it plays an essential structural role and its presence is essential for fluoride channel function. Its function is as follows. Fluoride-specific ion channel. Important for reducing fluoride concentration in the cell, thus reducing its toxicity. In Vibrio vulnificus (strain CMCP6), this protein is Fluoride-specific ion channel FluC.